The primary structure comprises 196 residues: Probable nicotinate-nucleotide adenylyltransferase (196 aa).

This sequence belongs to the NadD family.

The enzyme catalyses nicotinate beta-D-ribonucleotide + ATP + H(+) = deamido-NAD(+) + diphosphate. It functions in the pathway cofactor biosynthesis; NAD(+) biosynthesis; deamido-NAD(+) from nicotinate D-ribonucleotide: step 1/1. Catalyzes the reversible adenylation of nicotinate mononucleotide (NaMN) to nicotinic acid adenine dinucleotide (NaAD). In Thermotoga petrophila (strain ATCC BAA-488 / DSM 13995 / JCM 10881 / RKU-1), this protein is Probable nicotinate-nucleotide adenylyltransferase.